The sequence spans 262 residues: Abhydrolase domain-containing protein AKT2 (262 aa).

The Peroxisomal targeting signal type 1 signature appears at 260-262 (SKL).

This sequence belongs to the AB hydrolase superfamily. AKT2 hydrolase family.

It is found in the peroxisome. The protein operates within mycotoxin biosynthesis. Abhydrolase domain-containing protein; part of the gene clusters that mediate the biosynthesis of the host-selective toxins (HSTs) AK-toxins responsible for Japanese pear black spot disease by the Japanese pear pathotype. AK-toxins are esters of 9,10-epoxy 8-hydroxy 9-methyldecatrienoic acid (EDA). On cellular level, AK-toxins affect plasma membrane of susceptible cells and cause a sudden increase in loss of K(+) after a few minutes of toxin treatment. The acyl-CoA ligase AKT1, the hydrolase AKT2 and enoyl-CoA hydratase AKT3 are all involved in the biosynthesis of the AK-, AF- and ACT-toxin common 9,10-epoxy-8-hydroxy-9-methyl-decatrienoic acid (EDA) structural moiety. Part of the EDA biosynthesis occurs in the peroxisome since these 3 enzymes are localized in peroxisomes. The exact roles of the 3 enzymes, as well as of additional AK-toxin clusters enzymes, including AKT4, AKT6 and AKTS1, have still to be elucidated. The Cytochrome P450 monooxygenase AKT7 on the other side functions to limit production of EDA and AK-toxin, probably via the catalysis of a side reaction of EDA or its precursor. In Alternaria alternata (Alternaria rot fungus), this protein is Abhydrolase domain-containing protein AKT2.